A 60-amino-acid polypeptide reads, in one-letter code: Large ribosomal subunit protein uL30 (60 aa).

Belongs to the universal ribosomal protein uL30 family. Part of the 50S ribosomal subunit.

The chain is Large ribosomal subunit protein uL30 from Oceanobacillus iheyensis (strain DSM 14371 / CIP 107618 / JCM 11309 / KCTC 3954 / HTE831).